Reading from the N-terminus, the 324-residue chain is NADH-cytochrome b5 reductase 1 (324 aa).

The helical transmembrane segment at 49-69 (LNIVLAFVVGLIGSVVVLLYF) threads the bilayer. An FAD-binding FR-type domain is found at 81–184 (TQWQQYRLME…KGPKGQMRYA (104 aa)). Residues 164–179 (GSMK…GPKG) and 190–222 (HIGM…QIDF) each bind FAD.

The protein belongs to the flavoprotein pyridine nucleotide cytochrome reductase family. In terms of assembly, monomer. Component of the 2-(3-amino-3-carboxypropyl)histidine synthase complex composed of DPH1, DPH2, DPH3 and a NADH-dependent reductase, predominantly CBR1. It depends on FAD as a cofactor.

The protein resides in the mitochondrion outer membrane. The catalysed reaction is 2 Fe(III)-[cytochrome b5] + NADH = 2 Fe(II)-[cytochrome b5] + NAD(+) + H(+). The enzyme catalyses 2 Fe(3+)-[Dph3] + NADH = 2 Fe(2+)-[Dph3] + NAD(+) + H(+). It participates in protein modification; peptidyl-diphthamide biosynthesis. Functionally, NADH-dependent reductase for DPH3 and cytochrome b5. Required for the first step of diphthamide biosynthesis, a post-translational modification of histidine which occurs in elongation factor 2. DPH1 and DPH2 transfer a 3-amino-3-carboxypropyl (ACP) group from S-adenosyl-L-methionine (SAM) to a histidine residue, the reaction is assisted by a reduction system comprising DPH3 and a NADH-dependent reductase, predominantly CBR1. By reducing DPH3, also involved in the formation of the tRNA wobble base modification mcm5s 2U (5-methoxycarbonylmethyl-2-thiouridine), mediated by the elongator complex. The cytochrome b5/NADH cytochrome b5 reductase electron transfer system supports the catalytic activity of several sterol biosynthetic enzymes. In Mycosarcoma maydis (Corn smut fungus), this protein is NADH-cytochrome b5 reductase 1 (CBR1).